Reading from the N-terminus, the 195-residue chain is Small ribosomal subunit protein uS4 (195 aa).

Residues 88–150 form the S4 RNA-binding domain; that stretch reads RRLENVVYRL…SKNVELIKLA (63 aa).

The protein belongs to the universal ribosomal protein uS4 family. Part of the 30S ribosomal subunit. Contacts protein S5. The interaction surface between S4 and S5 is involved in control of translational fidelity.

Its function is as follows. One of the primary rRNA binding proteins, it binds directly to 16S rRNA where it nucleates assembly of the body of the 30S subunit. With S5 and S12 plays an important role in translational accuracy. This Fusobacterium nucleatum subsp. nucleatum (strain ATCC 25586 / DSM 15643 / BCRC 10681 / CIP 101130 / JCM 8532 / KCTC 2640 / LMG 13131 / VPI 4355) protein is Small ribosomal subunit protein uS4.